The following is a 252-amino-acid chain: Phosphate import ATP-binding protein PstB (252 aa).

In terms of domain architecture, ABC transporter spans 6 to 247 (IEVKNLNTYF…PKNKQTENYI (242 aa)). 38-45 (GPSGCGKS) contacts ATP.

This sequence belongs to the ABC transporter superfamily. Phosphate importer (TC 3.A.1.7) family. The complex is composed of two ATP-binding proteins (PstB), two transmembrane proteins (PstC and PstA) and a solute-binding protein (PstS).

The protein resides in the cell membrane. It carries out the reaction phosphate(out) + ATP + H2O = ADP + 2 phosphate(in) + H(+). Part of the ABC transporter complex PstSACB involved in phosphate import. Responsible for energy coupling to the transport system. The sequence is that of Phosphate import ATP-binding protein PstB from Methanosphaera stadtmanae (strain ATCC 43021 / DSM 3091 / JCM 11832 / MCB-3).